The following is a 414-amino-acid chain: Gamma-glutamyl phosphate reductase (414 aa).

Belongs to the gamma-glutamyl phosphate reductase family.

The protein resides in the cytoplasm. It catalyses the reaction L-glutamate 5-semialdehyde + phosphate + NADP(+) = L-glutamyl 5-phosphate + NADPH + H(+). It functions in the pathway amino-acid biosynthesis; L-proline biosynthesis; L-glutamate 5-semialdehyde from L-glutamate: step 2/2. Catalyzes the NADPH-dependent reduction of L-glutamate 5-phosphate into L-glutamate 5-semialdehyde and phosphate. The product spontaneously undergoes cyclization to form 1-pyrroline-5-carboxylate. This chain is Gamma-glutamyl phosphate reductase, found in Bacillus anthracis (strain A0248).